We begin with the raw amino-acid sequence, 404 residues long: Lysophospholipid transporter LplT (404 aa).

12 helical membrane passes run 16-36 (MIAV…LLFA), 53-73 (ILQM…GQFA), 91-111 (AGAL…LVGV), 139-159 (MMEA…GVLA), 164-184 (GVAL…NMFI), 195-213 (SWRP…LVLW), 227-247 (LFWG…PIAL), 253-273 (ATPT…AGAA), 285-305 (CLPA…QHSM), 310-330 (LLLI…NALL), 350-370 (GENT…KLGV), and 372-392 (VIAV…LLWG).

This sequence belongs to the major facilitator superfamily. LplT (TC 2.A.1.42) family.

The protein localises to the cell inner membrane. Functionally, catalyzes the facilitated diffusion of 2-acyl-glycero-3-phosphoethanolamine (2-acyl-GPE) into the cell. This Yersinia enterocolitica serotype O:8 / biotype 1B (strain NCTC 13174 / 8081) protein is Lysophospholipid transporter LplT.